The sequence spans 54 residues: Ovomucoid (54 aa).

The Kazal-like domain occupies 4 to 54 (VDCSDYPKPVCSLEYMPLCGSDSKTYSNKCDFCNAFVDSNGTLSLSHFGKC). Disulfide bonds link Cys6–Cys36, Cys14–Cys33, and Cys22–Cys54. Asn43 is a glycosylation site (N-linked (GlcNAc...) asparagine).

It is found in the secreted. The sequence is that of Ovomucoid from Circus aeruginosus (Western marsh harrier).